A 121-amino-acid chain; its full sequence is Protein FAM241B (121 aa).

The segment at 12–58 (QDDDPRVRTTTQPPRGSIPRQSFFNRGHGAPPGGPGPRQQQAGARLG) is disordered. Residues 19-35 (RTTTQPPRGSIPRQSFF) show a composition bias toward polar residues. Residue Ser33 is modified to Phosphoserine. Residues 48–58 (PRQQQAGARLG) show a composition bias toward low complexity. A Phosphoserine modification is found at Ser62. The chain crosses the membrane as a helical span at residues 92-112 (ILLLFLLMMLGVRGLLLVGLV).

Belongs to the FAM241 family.

The protein localises to the membrane. Its function is as follows. May play a role in lysosome homeostasis. The sequence is that of Protein FAM241B from Homo sapiens (Human).